The primary structure comprises 636 residues: Threonine--tRNA ligase (636 aa).

The TGS domain maps to 1–60; the sequence is MPIINFNNKEILFNYPISIIEIIKKFDKNLSENCIAAKINGKLLDVSEIINYDGSLELVK. Positions 242–533 are catalytic; it reads DHRKIGKKLD…ITEEFSGKYP (292 aa). Residues Cys-333, His-384, and His-510 each contribute to the Zn(2+) site.

Belongs to the class-II aminoacyl-tRNA synthetase family. In terms of assembly, homodimer. The cofactor is Zn(2+).

The protein resides in the cytoplasm. It carries out the reaction tRNA(Thr) + L-threonine + ATP = L-threonyl-tRNA(Thr) + AMP + diphosphate + H(+). Catalyzes the attachment of threonine to tRNA(Thr) in a two-step reaction: L-threonine is first activated by ATP to form Thr-AMP and then transferred to the acceptor end of tRNA(Thr). Also edits incorrectly charged L-seryl-tRNA(Thr). The protein is Threonine--tRNA ligase of Wigglesworthia glossinidia brevipalpis.